Reading from the N-terminus, the 492-residue chain is Regulatory protein ViaA (492 aa).

Belongs to the ViaA family. In terms of assembly, homodimer. Interacts with RavA.

It is found in the cytoplasm. Its function is as follows. Component of the RavA-ViaA chaperone complex, which may act on the membrane to optimize the function of some of the respiratory chains. ViaA stimulates the ATPase activity of RavA. In Pectobacterium atrosepticum (strain SCRI 1043 / ATCC BAA-672) (Erwinia carotovora subsp. atroseptica), this protein is Regulatory protein ViaA.